A 283-amino-acid chain; its full sequence is Shikimate dehydrogenase (NADP(+)) (283 aa).

Residues 18 to 20 (SYS) and threonine 66 each bind shikimate. The active-site Proton acceptor is the lysine 70. 2 residues coordinate shikimate: asparagine 91 and aspartate 106. Residues 130–134 (GAGGA) and methionine 225 each bind NADP(+). Tyrosine 227 provides a ligand contact to shikimate. Glycine 248 contacts NADP(+).

This sequence belongs to the shikimate dehydrogenase family. Homodimer.

The enzyme catalyses shikimate + NADP(+) = 3-dehydroshikimate + NADPH + H(+). The protein operates within metabolic intermediate biosynthesis; chorismate biosynthesis; chorismate from D-erythrose 4-phosphate and phosphoenolpyruvate: step 4/7. Involved in the biosynthesis of the chorismate, which leads to the biosynthesis of aromatic amino acids. Catalyzes the reversible NADPH linked reduction of 3-dehydroshikimate (DHSA) to yield shikimate (SA). In Pelodictyon phaeoclathratiforme (strain DSM 5477 / BU-1), this protein is Shikimate dehydrogenase (NADP(+)).